Here is a 289-residue protein sequence, read N- to C-terminus: Energy-coupling factor transporter ATP-binding protein EcfA2 (289 aa).

One can recognise an ABC transporter domain in the interval 3–246 (IQAKKLNYTY…PEWLKNHHLN (244 aa)). ATP is bound at residue 40-47 (GHTGSGKS).

The protein belongs to the ABC transporter superfamily. Energy-coupling factor EcfA family. Forms a stable energy-coupling factor (ECF) transporter complex composed of 2 membrane-embedded substrate-binding proteins (S component), 2 ATP-binding proteins (A component) and 2 transmembrane proteins (T component).

The protein localises to the cell membrane. In terms of biological role, ATP-binding (A) component of a common energy-coupling factor (ECF) ABC-transporter complex. Unlike classic ABC transporters this ECF transporter provides the energy necessary to transport a number of different substrates. The polypeptide is Energy-coupling factor transporter ATP-binding protein EcfA2 (Ligilactobacillus salivarius (strain UCC118) (Lactobacillus salivarius)).